The chain runs to 366 residues: tRNA-specific 2-thiouridylase MnmA (366 aa).

Residues 6-13 and Leu32 contribute to the ATP site; that span reads AMSGGVDS. The active-site Nucleophile is Cys101. Residues Cys101 and Cys198 are joined by a disulfide bond. Residue Gly125 participates in ATP binding. The interaction with tRNA stretch occupies residues 148–150; sequence KDQ. The active-site Cysteine persulfide intermediate is Cys198.

The protein belongs to the MnmA/TRMU family.

Its subcellular location is the cytoplasm. It carries out the reaction S-sulfanyl-L-cysteinyl-[protein] + uridine(34) in tRNA + AH2 + ATP = 2-thiouridine(34) in tRNA + L-cysteinyl-[protein] + A + AMP + diphosphate + H(+). Catalyzes the 2-thiolation of uridine at the wobble position (U34) of tRNA, leading to the formation of s(2)U34. The polypeptide is tRNA-specific 2-thiouridylase MnmA (Nocardioides sp. (strain ATCC BAA-499 / JS614)).